Here is a 479-residue protein sequence, read N- to C-terminus: ATP synthase subunit beta (479 aa).

Residue 153-160 coordinates ATP; sequence GGAGVGKT.

This sequence belongs to the ATPase alpha/beta chains family. In terms of assembly, F-type ATPases have 2 components, CF(1) - the catalytic core - and CF(0) - the membrane proton channel. CF(1) has five subunits: alpha(3), beta(3), gamma(1), delta(1), epsilon(1). CF(0) has three main subunits: a(1), b(2) and c(9-12). The alpha and beta chains form an alternating ring which encloses part of the gamma chain. CF(1) is attached to CF(0) by a central stalk formed by the gamma and epsilon chains, while a peripheral stalk is formed by the delta and b chains.

Its subcellular location is the cell membrane. It catalyses the reaction ATP + H2O + 4 H(+)(in) = ADP + phosphate + 5 H(+)(out). Produces ATP from ADP in the presence of a proton gradient across the membrane. The catalytic sites are hosted primarily by the beta subunits. This chain is ATP synthase subunit beta, found in Lactobacillus delbrueckii subsp. bulgaricus (strain ATCC BAA-365 / Lb-18).